Reading from the N-terminus, the 275-residue chain is Nitrogenase iron protein 1 (275 aa).

9-16 (GKGGIGKS) serves as a coordination point for ATP. Cys-97 contacts [4Fe-4S] cluster. Arg-100 is subject to ADP-ribosylarginine; by dinitrogenase reductase ADP-ribosyltransferase. Cys-132 contacts [4Fe-4S] cluster.

The protein belongs to the NifH/BchL/ChlL family. As to quaternary structure, homodimer. Requires [4Fe-4S] cluster as cofactor. The reversible ADP-ribosylation of Arg-100 inactivates the nitrogenase reductase and regulates nitrogenase activity.

The enzyme catalyses N2 + 8 reduced [2Fe-2S]-[ferredoxin] + 16 ATP + 16 H2O = H2 + 8 oxidized [2Fe-2S]-[ferredoxin] + 2 NH4(+) + 16 ADP + 16 phosphate + 6 H(+). In terms of biological role, the key enzymatic reactions in nitrogen fixation are catalyzed by the nitrogenase complex, which has 2 components: the iron protein and the molybdenum-iron protein. In Methanothermobacter marburgensis (strain ATCC BAA-927 / DSM 2133 / JCM 14651 / NBRC 100331 / OCM 82 / Marburg) (Methanobacterium thermoautotrophicum), this protein is Nitrogenase iron protein 1 (nifH1).